The chain runs to 319 residues: ATP-dependent 6-phosphofructokinase (319 aa).

Gly-11 contributes to the ATP binding site. Position 21–25 (21–25 (RAVVR)) interacts with ADP. ATP-binding positions include 72–73 (RS) and 102–105 (GDGS). Asp-103 serves as a coordination point for Mg(2+). 125–127 (TID) contacts substrate. Asp-127 acts as the Proton acceptor in catalysis. Residue Arg-154 coordinates ADP. Substrate contacts are provided by residues Arg-162 and 169–171 (MGR). Residues 185 to 187 (GAE) and 213 to 215 (KMH) each bind ADP. Residues Glu-222, Arg-243, and 249 to 252 (HIQR) each bind substrate.

It belongs to the phosphofructokinase type A (PFKA) family. ATP-dependent PFK group I subfamily. Prokaryotic clade 'B1' sub-subfamily. In terms of assembly, homotetramer. It depends on Mg(2+) as a cofactor.

It is found in the cytoplasm. The enzyme catalyses beta-D-fructose 6-phosphate + ATP = beta-D-fructose 1,6-bisphosphate + ADP + H(+). It participates in carbohydrate degradation; glycolysis; D-glyceraldehyde 3-phosphate and glycerone phosphate from D-glucose: step 3/4. Its activity is regulated as follows. Allosterically activated by ADP and other diphosphonucleosides, and allosterically inhibited by phosphoenolpyruvate. Its function is as follows. Catalyzes the phosphorylation of D-fructose 6-phosphate to fructose 1,6-bisphosphate by ATP, the first committing step of glycolysis. This chain is ATP-dependent 6-phosphofructokinase, found in Clostridium tetani (strain Massachusetts / E88).